The following is a 227-amino-acid chain: Enolase-phosphatase E1 (227 aa).

This sequence belongs to the HAD-like hydrolase superfamily. MasA/MtnC family. Monomer. The cofactor is Mg(2+).

It catalyses the reaction 5-methylsulfanyl-2,3-dioxopentyl phosphate + H2O = 1,2-dihydroxy-5-(methylsulfanyl)pent-1-en-3-one + phosphate. The protein operates within amino-acid biosynthesis; L-methionine biosynthesis via salvage pathway; L-methionine from S-methyl-5-thio-alpha-D-ribose 1-phosphate: step 3/6. It participates in amino-acid biosynthesis; L-methionine biosynthesis via salvage pathway; L-methionine from S-methyl-5-thio-alpha-D-ribose 1-phosphate: step 4/6. Its function is as follows. Bifunctional enzyme that catalyzes the enolization of 2,3-diketo-5-methylthiopentyl-1-phosphate (DK-MTP-1-P) into the intermediate 2-hydroxy-3-keto-5-methylthiopentenyl-1-phosphate (HK-MTPenyl-1-P), which is then dephosphorylated to form the acireductone 1,2-dihydroxy-3-keto-5-methylthiopentene (DHK-MTPene). This Gluconobacter oxydans (strain 621H) (Gluconobacter suboxydans) protein is Enolase-phosphatase E1.